Here is a 391-residue protein sequence, read N- to C-terminus: Response regulator aspartate phosphatase I (391 aa).

6 TPR repeats span residues 62–95 (LEFR…EKQG), 150–183 (SYVY…AVQT), 184–217 (VRCQ…SKES), 224–257 (AMSH…FEKS), 275–311 (KQQN…LEGL), and 338–371 (ENFS…RRKI).

This sequence belongs to the Rap family.

It localises to the cytoplasm. With respect to regulation, inhibited by PhrI. In terms of biological role, activates ICEBs1 gene expression, excision and transfer by inactivating the ICEBs1 repressor protein ImmR. RapI-mediated induction likely results from an increase in the specific activity of the protease ImmA, which mediates proteolysis of ImmR. In addition, is involved in regulation of sporulation. Acts as a phosphatase that specifically dephosphorylates the sporulation initiation phosphotransferase Spo0F and inhibits its activity. The chain is Response regulator aspartate phosphatase I (rapI) from Bacillus subtilis (strain 168).